Reading from the N-terminus, the 403-residue chain is Phosphopentomutase (403 aa).

Mn(2+)-binding residues include Asp13, Asp298, His303, Asp339, His340, and His351.

Belongs to the phosphopentomutase family. The cofactor is Mn(2+).

It localises to the cytoplasm. The catalysed reaction is 2-deoxy-alpha-D-ribose 1-phosphate = 2-deoxy-D-ribose 5-phosphate. It carries out the reaction alpha-D-ribose 1-phosphate = D-ribose 5-phosphate. Its pathway is carbohydrate degradation; 2-deoxy-D-ribose 1-phosphate degradation; D-glyceraldehyde 3-phosphate and acetaldehyde from 2-deoxy-alpha-D-ribose 1-phosphate: step 1/2. Functionally, isomerase that catalyzes the conversion of deoxy-ribose 1-phosphate (dRib-1-P) and ribose 1-phosphate (Rib-1-P) to deoxy-ribose 5-phosphate (dRib-5-P) and ribose 5-phosphate (Rib-5-P), respectively. This Streptococcus pyogenes serotype M28 (strain MGAS6180) protein is Phosphopentomutase.